The chain runs to 484 residues: RxLR effector protein PexRD18 (484 aa).

The first 20 residues, 1 to 20, serve as a signal peptide directing secretion; sequence MSHQRILLLLMAAFFAWVSA. Residues 55 to 79 carry the RxLR-dEER motif; the sequence is RFLRLYDAEVRDTVRGDNDVDREER.

Belongs to the RxLR effector family.

It is found in the secreted. Its subcellular location is the host cell membrane. Effector that enhances P.infestans colonization of Nicotiana benthamiana leaves. This chain is RxLR effector protein PexRD18, found in Phytophthora infestans (strain T30-4) (Potato late blight agent).